The primary structure comprises 908 residues: DNA mismatch repair protein MutS (908 aa).

662-669 (GPNMGGKS) contacts ATP.

The protein belongs to the DNA mismatch repair MutS family.

This protein is involved in the repair of mismatches in DNA. It is possible that it carries out the mismatch recognition step. This protein has a weak ATPase activity. The protein is DNA mismatch repair protein MutS of Rhizobium johnstonii (strain DSM 114642 / LMG 32736 / 3841) (Rhizobium leguminosarum bv. viciae).